Reading from the N-terminus, the 199-residue chain is Imidazoleglycerol-phosphate dehydratase (199 aa).

It belongs to the imidazoleglycerol-phosphate dehydratase family.

Its subcellular location is the cytoplasm. The enzyme catalyses D-erythro-1-(imidazol-4-yl)glycerol 3-phosphate = 3-(imidazol-4-yl)-2-oxopropyl phosphate + H2O. It functions in the pathway amino-acid biosynthesis; L-histidine biosynthesis; L-histidine from 5-phospho-alpha-D-ribose 1-diphosphate: step 6/9. The chain is Imidazoleglycerol-phosphate dehydratase from Paramagnetospirillum magneticum (strain ATCC 700264 / AMB-1) (Magnetospirillum magneticum).